Consider the following 186-residue polypeptide: ADP-ribosylation factor-like protein 6 (186 aa).

Gly-2 is lipidated: N-myristoyl glycine. Residues 24-31 (GLDNSGKT), Thr-50, 69-73 (DMSGQ), Gly-72, 130-133 (NKMD), and Ala-164 each bind GTP. The Mg(2+) site is built by Thr-31 and Thr-50.

This sequence belongs to the small GTPase superfamily. Arf family. In terms of assembly, interacts with SEC61B, ARL6IP1, ARL6IP2, ARL6IP3, ARL6IP4 ARL6IP5 and ARL6IP6. Interacts (GTP-bound form) with the BBSome a complex that contains BBS1, BBS2, BBS4, BBS5, BBS7, BBS8/TTC8, BBS9 and BBIP10. Interacts (GTP-free form) with IFT27.

It is found in the cell projection. The protein resides in the cilium membrane. The protein localises to the cytoplasm. Its subcellular location is the cytoskeleton. It localises to the cilium axoneme. It is found in the cilium basal body. Involved in membrane protein trafficking at the base of the ciliary organelle. Mediates recruitment onto plasma membrane of the BBSome complex which would constitute a coat complex required for sorting of specific membrane proteins to the primary cilia. Together with BBS1, is necessary for correct trafficking of PKD1 to primary cilia. Together with the BBSome complex and LTZL1, controls SMO ciliary trafficking and contributes to the sonic hedgehog (SHH) pathway regulation. May regulate cilia assembly and disassembly and subsequent ciliary signaling events such as the Wnt signaling cascade. Isoform 2 may be required for proper retinal function and organization. The polypeptide is ADP-ribosylation factor-like protein 6 (ARL6) (Homo sapiens (Human)).